Consider the following 54-residue polypeptide: Large ribosomal subunit protein bL32 (54 aa).

The protein belongs to the bacterial ribosomal protein bL32 family.

The chain is Large ribosomal subunit protein bL32 from Buchnera aphidicola subsp. Baizongia pistaciae (strain Bp).